The following is a 305-amino-acid chain: tRNA dimethylallyltransferase (305 aa).

Gly12–Thr19 serves as a coordination point for ATP. Thr14–Thr19 is a binding site for substrate. Interaction with substrate tRNA regions lie at residues Asp37–Leu40, Gln161–Arg165, and Arg242–Arg247.

Belongs to the IPP transferase family. In terms of assembly, monomer. The cofactor is Mg(2+).

It catalyses the reaction adenosine(37) in tRNA + dimethylallyl diphosphate = N(6)-dimethylallyladenosine(37) in tRNA + diphosphate. Its function is as follows. Catalyzes the transfer of a dimethylallyl group onto the adenine at position 37 in tRNAs that read codons beginning with uridine, leading to the formation of N6-(dimethylallyl)adenosine (i(6)A). The sequence is that of tRNA dimethylallyltransferase from Psychromonas ingrahamii (strain DSM 17664 / CCUG 51855 / 37).